The primary structure comprises 447 residues: Large ribosomal subunit protein bL27m (447 aa).

2 stretches are compositionally biased toward basic and acidic residues: residues 377–402 and 409–447; these read QREA…KAEK and KVEK…EKKD. A disordered region spans residues 377-447; the sequence is QREAKKAREG…KKDSKTEKKD (71 aa).

This sequence belongs to the bacterial ribosomal protein bL27 family. In terms of assembly, component of the mitochondrial large ribosomal subunit (mt-LSU). Mature N.crassa 74S mitochondrial ribosomes consist of a small (37S) and a large (54S) subunit. The 37S small subunit contains a 16S ribosomal RNA (16S mt-rRNA) and 32 different proteins. The 54S large subunit contains a 23S rRNA (23S mt-rRNA) and 42 different proteins.

It is found in the mitochondrion. Functionally, component of the mitochondrial ribosome (mitoribosome), a dedicated translation machinery responsible for the synthesis of mitochondrial genome-encoded proteins, including at least some of the essential transmembrane subunits of the mitochondrial respiratory chain. The mitoribosomes are attached to the mitochondrial inner membrane and translation products are cotranslationally integrated into the membrane. The polypeptide is Large ribosomal subunit protein bL27m (mrp7) (Neurospora crassa (strain ATCC 24698 / 74-OR23-1A / CBS 708.71 / DSM 1257 / FGSC 987)).